Consider the following 143-residue polypeptide: Insulin-like growth factor 1 (143 aa).

Positions 1–32 (MITPTVKMRILSSSHLFYLALCLLTFTSSATA) are cleaved as a signal peptide. Residues 33–61 (GPETLCGAELVDALQFVCGDRGFYFNKPT) are b. 3 disulfide bridges follow: cysteine 38-cysteine 80, cysteine 50-cysteine 93, and cysteine 79-cysteine 84. The segment at 62 to 73 (GYGSSSRRAPQT) is c. An a region spans residues 74 to 94 (GIVDECCFRSCDLRRLEMYCA). The interval 95-102 (PLKPAKAA) is d. The interval 99–143 (AKAARSVRAQRHTDMPKTQKYQPPSTNKKMKSQRRRKGSTFEEHK) is disordered. Positions 103 to 143 (RSVRAQRHTDMPKTQKYQPPSTNKKMKSQRRRKGSTFEEHK) are cleaved as a propeptide — e peptide. Residues 126–136 (KKMKSQRRRKG) show a composition bias toward basic residues.

Belongs to the insulin family. In terms of assembly, forms a ternary complex with IGFR1 and ITGAV:ITGB3. Forms a ternary complex with IGFR1 and ITGA6:ITGB4. Forms a ternary complex with IGFBP3 and ALS.

The protein resides in the secreted. The insulin-like growth factors, isolated from plasma, are structurally and functionally related to insulin but have a much higher growth-promoting activity. May be a physiological regulator of [1-14C]-2-deoxy-D-glucose (2DG) transport and glycogen synthesis in osteoblasts. Stimulates glucose transport in bone-derived osteoblastic (PyMS) cells and is effective at much lower concentrations than insulin, not only regarding glycogen and DNA synthesis but also with regard to enhancing glucose uptake. May play a role in synapse maturation. Ca(2+)-dependent exocytosis of IGF1 is required for sensory perception of smell in the olfactory bulb. Acts as a ligand for IGF1R. Binds to the alpha subunit of IGF1R, leading to the activation of the intrinsic tyrosine kinase activity which autophosphorylates tyrosine residues in the beta subunit thus initiating a cascade of down-stream signaling events leading to activation of the PI3K-AKT/PKB and the Ras-MAPK pathways. Binds to integrins ITGAV:ITGB3 and ITGA6:ITGB4. Its binding to integrins and subsequent ternary complex formation with integrins and IGFR1 are essential for IGF1 signaling. Induces the phosphorylation and activation of IGFR1, MAPK3/ERK1, MAPK1/ERK2 and AKT1. As part of the MAPK/ERK signaling pathway, acts as a negative regulator of apoptosis in cardiomyocytes via promotion of STUB1/CHIP-mediated ubiquitination and degradation of ICER-type isoforms of CREM. In Oryctolagus cuniculus (Rabbit), this protein is Insulin-like growth factor 1.